The chain runs to 251 residues: Dehydration-responsive element-binding protein 1I (251 aa).

The segment at 1-50 is disordered; the sequence is MCTSKLEEITGEWPPPALQAASTTSSSEPCRRLSPPSSKRPAGRTKFHET. The segment at residues 54–114 is a DNA-binding region (AP2/ERF); that stretch reads VFRGVRRRGR…GRAAACLNFA (61 aa). The tract at residues 169–198 is disordered; the sequence is ATSEPSAASDDDAVTSSSSTTDADEEASPF.

This sequence belongs to the AP2/ERF transcription factor family. ERF subfamily.

The protein resides in the nucleus. Its function is as follows. Transcriptional activator that binds specifically to the DNA sequence 5'-[AG]CCGAC-3'. Binding to the C-repeat/DRE element mediates high salinity- and dehydration-inducible transcription. This Oryza sativa subsp. japonica (Rice) protein is Dehydration-responsive element-binding protein 1I (DREB1I).